Here is a 249-residue protein sequence, read N- to C-terminus: MERHVPEPTHTLEGWHVLHDFRLLDFARWFSAPLEAREDAWEELKGLVREWRELEEAGQGSYGIYQVVGHKADLLFLNLRPGLDPLLEAEARLSRSAFARYLGRSYSFYSVVELGSQEKPLDPESPYVKPRLTPRVPKSGYVCFYPMNKRRQGQDNWYMLPAKERASLMKAHGETGRKYQGKVMQVISGAQGLDDWEWGVDLFSEDPVQFKKIVYEMRFDEVSARYGEFGPFFVGKYLDEEALRAFLGL.

Residues Arg131, 145–149 (YPMNK), His172, Gln185, and Ser223 contribute to the Fe-coproporphyrin III site. Residue Tyr145 is part of the active site.

The protein belongs to the ChdC family. Type 1 subfamily. Fe-coproporphyrin III is required as a cofactor.

The catalysed reaction is Fe-coproporphyrin III + 2 H2O2 + 2 H(+) = heme b + 2 CO2 + 4 H2O. It carries out the reaction Fe-coproporphyrin III + H2O2 + H(+) = harderoheme III + CO2 + 2 H2O. The enzyme catalyses harderoheme III + H2O2 + H(+) = heme b + CO2 + 2 H2O. It functions in the pathway porphyrin-containing compound metabolism; protoheme biosynthesis. Its function is as follows. Involved in coproporphyrin-dependent heme b biosynthesis. Catalyzes the decarboxylation of Fe-coproporphyrin III (coproheme) to heme b (protoheme IX), the last step of the pathway. The reaction occurs in a stepwise manner with a three-propionate intermediate. In Thermus thermophilus (strain ATCC BAA-163 / DSM 7039 / HB27), this protein is Coproheme decarboxylase.